Here is a 111-residue protein sequence, read N- to C-terminus: uncharacterized protein (111 aa).

Transmembrane regions (helical) follow at residues 27–47 (IIVLFCLLCIIVTLGVIGYKF) and 80–100 (IFTGIYAVLVGVFFISVISAI).

It localises to the membrane. This is an uncharacterized protein from Acanthamoeba polyphaga (Amoeba).